A 427-amino-acid chain; its full sequence is Trigger factor (427 aa).

Positions 160-240 (TDTVIGDVEK…VKEVKRLELP (81 aa)) constitute a PPIase FKBP-type domain.

It belongs to the FKBP-type PPIase family. Tig subfamily.

It localises to the cytoplasm. The catalysed reaction is [protein]-peptidylproline (omega=180) = [protein]-peptidylproline (omega=0). Functionally, involved in protein export. Acts as a chaperone by maintaining the newly synthesized protein in an open conformation. Functions as a peptidyl-prolyl cis-trans isomerase. This Chlorobium phaeobacteroides (strain DSM 266 / SMG 266 / 2430) protein is Trigger factor.